We begin with the raw amino-acid sequence, 420 residues long: Pyrophosphate--fructose 6-phosphate 1-phosphotransferase (420 aa).

Residue G13 coordinates diphosphate. Substrate contacts are provided by residues 142–144, 190–192, E247, and 297–300; these read TVD, MGR, and YLQR. Catalysis depends on D144, which acts as the Proton acceptor.

It belongs to the phosphofructokinase type A (PFKA) family. PPi-dependent PFK group II subfamily. Clade 'B2' sub-subfamily. As to quaternary structure, homodimer. The cofactor is Mg(2+). Requires Co(2+) as cofactor. It depends on Mn(2+) as a cofactor.

It is found in the cytoplasm. It catalyses the reaction beta-D-fructose 6-phosphate + diphosphate = beta-D-fructose 1,6-bisphosphate + phosphate + H(+). Its pathway is carbohydrate degradation; glycolysis; D-glyceraldehyde 3-phosphate and glycerone phosphate from D-glucose: step 3/4. Non-allosteric. Its function is as follows. Catalyzes the phosphorylation of D-fructose 6-phosphate, the first committing step of glycolysis. Uses inorganic phosphate (PPi) as phosphoryl donor instead of ATP like common ATP-dependent phosphofructokinases (ATP-PFKs), which renders the reaction reversible, and can thus function both in glycolysis and gluconeogenesis. Consistently, PPi-PFK can replace the enzymes of both the forward (ATP-PFK) and reverse (fructose-bisphosphatase (FBPase)) reactions. The polypeptide is Pyrophosphate--fructose 6-phosphate 1-phosphotransferase (Methylococcus capsulatus (strain ATCC 33009 / NCIMB 11132 / Bath)).